We begin with the raw amino-acid sequence, 415 residues long: DNA polymerase IV 2 (415 aa).

Residues 7–183 form the UmuC domain; the sequence is ILHADLDAFY…LPVSLMWGVG (177 aa). Mg(2+) is bound by residues D11 and D101. E102 is an active-site residue.

Belongs to the DNA polymerase type-Y family. In terms of assembly, monomer. It depends on Mg(2+) as a cofactor.

The protein localises to the cytoplasm. It catalyses the reaction DNA(n) + a 2'-deoxyribonucleoside 5'-triphosphate = DNA(n+1) + diphosphate. Functionally, poorly processive, error-prone DNA polymerase involved in untargeted mutagenesis. Copies undamaged DNA at stalled replication forks, which arise in vivo from mismatched or misaligned primer ends. These misaligned primers can be extended by PolIV. Exhibits no 3'-5' exonuclease (proofreading) activity. May be involved in translesional synthesis, in conjunction with the beta clamp from PolIII. The sequence is that of DNA polymerase IV 2 (dinB2) from Mesorhizobium japonicum (strain LMG 29417 / CECT 9101 / MAFF 303099) (Mesorhizobium loti (strain MAFF 303099)).